Reading from the N-terminus, the 1013-residue chain is Antigenic heat-stable 120 kDa protein (1013 aa).

Disordered stretches follow at residues 1–73 (DTSE…TSDP) and 348–396 (GQSK…PQSQ). Basic and acidic residues predominate over residues 12 to 27 (EYTEEQKQKLEQEQKE). Positions 47 to 61 (SASSAQSTPSISALS) are enriched in low complexity. Composition is skewed to polar residues over residues 62 to 73 (GNISPDSQTSDP), 348 to 373 (GQSK…QYKQ), and 380 to 396 (PTNQ…PQSQ).

It is found in the cytoplasm. In Rickettsia rhipicephali, this protein is Antigenic heat-stable 120 kDa protein (sca4).